The sequence spans 734 residues: Photosystem I P700 chlorophyll a apoprotein A2 (734 aa).

8 consecutive transmembrane segments (helical) span residues 46 to 69 (IFASHFGQLAIIFLWTSGNLFHVA), 135 to 158 (LYTGAIFLLFLSFISLLAGWLHLQ), 175 to 199 (LNHHLSGLFGVSSLAWAGHLVHVAI), 273 to 291 (VAHHHLAIAFLFLIGGLMY), 330 to 353 (IHFQLGLALASLGVITSLVAQHMY), 369 to 395 (AALYTHHQYIAGFIMTGAFAHGPIFFI), 417 to 439 (AIISHLSWASLFLGFHTLGLYVH), and 517 to 535 (FLVHHAIALGLHTTTLILV). [4Fe-4S] cluster contacts are provided by Cys559 and Cys568. A run of 2 helical transmembrane segments spans residues 575–596 (DFYLAVFWMLNTIGWVTFYWHW) and 643–665 (LSVWAWMFLFGHLVWATGFMFLI). His654, Met662, and Tyr670 together coordinate chlorophyll a. Trp671 contacts phylloquinone. A helical transmembrane segment spans residues 707-727 (LVGLVHFSVGYIFTYAAFLIA).

It belongs to the PsaA/PsaB family. In terms of assembly, the PsaA/B heterodimer binds the P700 chlorophyll special pair and subsequent electron acceptors. PSI consists of a core antenna complex that captures photons, and an electron transfer chain that converts photonic excitation into a charge separation. The eukaryotic PSI reaction center is composed of at least 11 subunits. P700 is a chlorophyll a/chlorophyll a' dimer, A0 is one or more chlorophyll a, A1 is one or both phylloquinones and FX is a shared 4Fe-4S iron-sulfur center. serves as cofactor.

The protein localises to the plastid. The protein resides in the chloroplast thylakoid membrane. The enzyme catalyses reduced [plastocyanin] + hnu + oxidized [2Fe-2S]-[ferredoxin] = oxidized [plastocyanin] + reduced [2Fe-2S]-[ferredoxin]. In terms of biological role, psaA and PsaB bind P700, the primary electron donor of photosystem I (PSI), as well as the electron acceptors A0, A1 and FX. PSI is a plastocyanin-ferredoxin oxidoreductase, converting photonic excitation into a charge separation, which transfers an electron from the donor P700 chlorophyll pair to the spectroscopically characterized acceptors A0, A1, FX, FA and FB in turn. Oxidized P700 is reduced on the lumenal side of the thylakoid membrane by plastocyanin. This chain is Photosystem I P700 chlorophyll a apoprotein A2, found in Pisum sativum (Garden pea).